Here is a 281-residue protein sequence, read N- to C-terminus: Elongation factor Ts (281 aa).

Residues 80-83 (TDFV) are involved in Mg(2+) ion dislocation from EF-Tu.

Belongs to the EF-Ts family.

It localises to the cytoplasm. Functionally, associates with the EF-Tu.GDP complex and induces the exchange of GDP to GTP. It remains bound to the aminoacyl-tRNA.EF-Tu.GTP complex up to the GTP hydrolysis stage on the ribosome. The sequence is that of Elongation factor Ts from Vibrio parahaemolyticus serotype O3:K6 (strain RIMD 2210633).